The chain runs to 350 residues: Uroporphyrinogen decarboxylase (350 aa).

Substrate is bound by residues 28 to 32, D78, Y155, S210, and H325; that span reads RQAGR.

The protein belongs to the uroporphyrinogen decarboxylase family. As to quaternary structure, homodimer.

It localises to the cytoplasm. It catalyses the reaction uroporphyrinogen III + 4 H(+) = coproporphyrinogen III + 4 CO2. It functions in the pathway porphyrin-containing compound metabolism; protoporphyrin-IX biosynthesis; coproporphyrinogen-III from 5-aminolevulinate: step 4/4. In terms of biological role, catalyzes the decarboxylation of four acetate groups of uroporphyrinogen-III to yield coproporphyrinogen-III. The sequence is that of Uroporphyrinogen decarboxylase from Picosynechococcus sp. (strain ATCC 27264 / PCC 7002 / PR-6) (Agmenellum quadruplicatum).